The chain runs to 894 residues: Bifunctional glutamine synthetase adenylyltransferase/adenylyl-removing enzyme (894 aa).

Residues 1–410 form an adenylyl removase region; that stretch reads MPANTSAAIA…HFEQVFILPS (410 aa). Residues 415 to 894 form an adenylyl transferase region; it reads SHPLSELWLD…QVFEQALDFS (480 aa).

It belongs to the GlnE family. It depends on Mg(2+) as a cofactor.

It catalyses the reaction [glutamine synthetase]-O(4)-(5'-adenylyl)-L-tyrosine + phosphate = [glutamine synthetase]-L-tyrosine + ADP. It carries out the reaction [glutamine synthetase]-L-tyrosine + ATP = [glutamine synthetase]-O(4)-(5'-adenylyl)-L-tyrosine + diphosphate. Its function is as follows. Involved in the regulation of glutamine synthetase GlnA, a key enzyme in the process to assimilate ammonia. When cellular nitrogen levels are high, the C-terminal adenylyl transferase (AT) inactivates GlnA by covalent transfer of an adenylyl group from ATP to specific tyrosine residue of GlnA, thus reducing its activity. Conversely, when nitrogen levels are low, the N-terminal adenylyl removase (AR) activates GlnA by removing the adenylyl group by phosphorolysis, increasing its activity. The regulatory region of GlnE binds the signal transduction protein PII (GlnB) which indicates the nitrogen status of the cell. This is Bifunctional glutamine synthetase adenylyltransferase/adenylyl-removing enzyme from Chromobacterium violaceum (strain ATCC 12472 / DSM 30191 / JCM 1249 / CCUG 213 / NBRC 12614 / NCIMB 9131 / NCTC 9757 / MK).